Here is a 461-residue protein sequence, read N- to C-terminus: Bifunctional protein HldE (461 aa).

A ribokinase region spans residues 1–315 (MKKILVIGDL…LILNQTHPKI (315 aa)). 191–194 (NRTE) serves as a coordination point for ATP. Asp260 is a catalytic residue. Residues 332 to 461 (FTNGCFDLLH…IEKIKRTCND (130 aa)) form a cytidylyltransferase region.

The protein in the N-terminal section; belongs to the carbohydrate kinase PfkB family. In the C-terminal section; belongs to the cytidylyltransferase family. Homodimer.

It carries out the reaction D-glycero-beta-D-manno-heptose 7-phosphate + ATP = D-glycero-beta-D-manno-heptose 1,7-bisphosphate + ADP + H(+). The enzyme catalyses D-glycero-beta-D-manno-heptose 1-phosphate + ATP + H(+) = ADP-D-glycero-beta-D-manno-heptose + diphosphate. The protein operates within nucleotide-sugar biosynthesis; ADP-L-glycero-beta-D-manno-heptose biosynthesis; ADP-L-glycero-beta-D-manno-heptose from D-glycero-beta-D-manno-heptose 7-phosphate: step 1/4. It participates in nucleotide-sugar biosynthesis; ADP-L-glycero-beta-D-manno-heptose biosynthesis; ADP-L-glycero-beta-D-manno-heptose from D-glycero-beta-D-manno-heptose 7-phosphate: step 3/4. Its pathway is bacterial outer membrane biogenesis; LPS core biosynthesis. Its function is as follows. Catalyzes the phosphorylation of D-glycero-D-manno-heptose 7-phosphate at the C-1 position to selectively form D-glycero-beta-D-manno-heptose-1,7-bisphosphate. In terms of biological role, catalyzes the ADP transfer from ATP to D-glycero-beta-D-manno-heptose 1-phosphate, yielding ADP-D-glycero-beta-D-manno-heptose. This Helicobacter pylori (strain ATCC 700392 / 26695) (Campylobacter pylori) protein is Bifunctional protein HldE.